We begin with the raw amino-acid sequence, 360 residues long: DNA replication and repair protein RecF (360 aa).

Residue 30–37 participates in ATP binding; that stretch reads GRNAQGKT.

This sequence belongs to the RecF family.

The protein resides in the cytoplasm. The RecF protein is involved in DNA metabolism; it is required for DNA replication and normal SOS inducibility. RecF binds preferentially to single-stranded, linear DNA. It also seems to bind ATP. The polypeptide is DNA replication and repair protein RecF (Desulforudis audaxviator (strain MP104C)).